Reading from the N-terminus, the 351-residue chain is Ion-translocating oxidoreductase complex subunit D (351 aa).

3 helical membrane passes run 37-57 (YFFGWGTLLQVLLAIITAILA), 88-108 (AIPPLSPWWLTVIGVFFAIVI), and 123-143 (PAMAAYVVLLISFPVQMTTWL). An FMN phosphoryl threonine modification is found at Thr-187. 4 consecutive transmembrane segments (helical) span residues 214–234 (FAGLGWLWVNVGFLLGGLFLL), 241–261 (WHIPVSFLASLFIVSSLFAVF), 270–290 (IFNLFSGATMLGAFFIATDPV), and 300–317 (LYYGALIGLLVYMIRSWG).

Belongs to the NqrB/RnfD family. The complex is composed of six subunits: RnfA, RnfB, RnfC, RnfD, RnfE and RnfG. Requires FMN as cofactor.

The protein resides in the cell inner membrane. Part of a membrane-bound complex that couples electron transfer with translocation of ions across the membrane. In Aliivibrio salmonicida (strain LFI1238) (Vibrio salmonicida (strain LFI1238)), this protein is Ion-translocating oxidoreductase complex subunit D.